Consider the following 282-residue polypeptide: ATP synthase gamma chain (282 aa).

This sequence belongs to the ATPase gamma chain family. As to quaternary structure, F-type ATPases have 2 components, CF(1) - the catalytic core - and CF(0) - the membrane proton channel. CF(1) has five subunits: alpha(3), beta(3), gamma(1), delta(1), epsilon(1). CF(0) has three main subunits: a, b and c.

Its subcellular location is the cell inner membrane. Its function is as follows. Produces ATP from ADP in the presence of a proton gradient across the membrane. The gamma chain is believed to be important in regulating ATPase activity and the flow of protons through the CF(0) complex. This chain is ATP synthase gamma chain, found in Fusobacterium nucleatum subsp. nucleatum (strain ATCC 25586 / DSM 15643 / BCRC 10681 / CIP 101130 / JCM 8532 / KCTC 2640 / LMG 13131 / VPI 4355).